A 436-amino-acid chain; its full sequence is UDP-N-acetylglucosamine 1-carboxyvinyltransferase 1 (436 aa).

22-23 (KN) serves as a coordination point for phosphoenolpyruvate. Arg-93 lines the UDP-N-acetyl-alpha-D-glucosamine pocket. The Proton donor role is filled by Cys-117. Cys-117 bears the 2-(S-cysteinyl)pyruvic acid O-phosphothioketal mark. Residues 122–126 (RPIDQ), Asp-306, and Val-328 contribute to the UDP-N-acetyl-alpha-D-glucosamine site.

Belongs to the EPSP synthase family. MurA subfamily.

Its subcellular location is the cytoplasm. The enzyme catalyses phosphoenolpyruvate + UDP-N-acetyl-alpha-D-glucosamine = UDP-N-acetyl-3-O-(1-carboxyvinyl)-alpha-D-glucosamine + phosphate. Its pathway is cell wall biogenesis; peptidoglycan biosynthesis. In terms of biological role, cell wall formation. Adds enolpyruvyl to UDP-N-acetylglucosamine. Essential for cell growth. The polypeptide is UDP-N-acetylglucosamine 1-carboxyvinyltransferase 1 (Bacillus subtilis (strain 168)).